We begin with the raw amino-acid sequence, 142 residues long: Deoxyuridine 5'-triphosphate nucleotidohydrolase (142 aa).

Substrate contacts are provided by residues 62–64, Asn75, and 79–81; these read RSG and TID.

The protein belongs to the dUTPase family. Mg(2+) serves as cofactor.

The catalysed reaction is dUTP + H2O = dUMP + diphosphate + H(+). It participates in pyrimidine metabolism; dUMP biosynthesis; dUMP from dCTP (dUTP route): step 2/2. In terms of biological role, this enzyme is involved in nucleotide metabolism: it produces dUMP, the immediate precursor of thymidine nucleotides and it decreases the intracellular concentration of dUTP so that uracil cannot be incorporated into DNA. The protein is Deoxyuridine 5'-triphosphate nucleotidohydrolase of Trichodesmium erythraeum (strain IMS101).